The chain runs to 141 residues: Large ribosomal subunit protein uL11 (141 aa).

This sequence belongs to the universal ribosomal protein uL11 family. In terms of assembly, part of the ribosomal stalk of the 50S ribosomal subunit. Interacts with L10 and the large rRNA to form the base of the stalk. L10 forms an elongated spine to which L12 dimers bind in a sequential fashion forming a multimeric L10(L12)X complex. Post-translationally, one or more lysine residues are methylated.

In terms of biological role, forms part of the ribosomal stalk which helps the ribosome interact with GTP-bound translation factors. The protein is Large ribosomal subunit protein uL11 of Ruegeria sp. (strain TM1040) (Silicibacter sp.).